Reading from the N-terminus, the 205-residue chain is Large ribosomal subunit protein uL4 (205 aa).

Belongs to the universal ribosomal protein uL4 family. In terms of assembly, part of the 50S ribosomal subunit.

Functionally, one of the primary rRNA binding proteins, this protein initially binds near the 5'-end of the 23S rRNA. It is important during the early stages of 50S assembly. It makes multiple contacts with different domains of the 23S rRNA in the assembled 50S subunit and ribosome. Its function is as follows. Forms part of the polypeptide exit tunnel. The sequence is that of Large ribosomal subunit protein uL4 from Ruegeria sp. (strain TM1040) (Silicibacter sp.).